Here is a 512-residue protein sequence, read N- to C-terminus: Hyaluronidase PH-20 (512 aa).

A signal peptide spans 1–35 (MGELRFKHLFWGSFVESGGTFQTVLIFLLIPCSLT). N-linked (GlcNAc...) asparagine glycosylation occurs at asparagine 46. Cystine bridges form between cysteine 60–cysteine 351 and cysteine 223–cysteine 237. Glutamate 147 acts as the Proton donor in catalysis. Asparagine 165 carries an N-linked (GlcNAc...) asparagine glycan. N-linked (GlcNAc...) asparagine glycans are attached at residues asparagine 293 and asparagine 368. 3 cysteine pairs are disulfide-bonded: cysteine 376/cysteine 387, cysteine 381/cysteine 435, and cysteine 437/cysteine 464.

The protein belongs to the glycosyl hydrolase 56 family.

It localises to the cell membrane. It catalyses the reaction Random hydrolysis of (1-&gt;4)-linkages between N-acetyl-beta-D-glucosamine and D-glucuronate residues in hyaluronate.. Functionally, involved in sperm-egg adhesion. Upon fertilization sperm must first penetrate a layer of cumulus cells that surrounds the egg before reaching the zona pellucida. The cumulus cells are embedded in a matrix containing hyaluronic acid which is formed prior to ovulation. This protein aids in penetrating the layer of cumulus cells by digesting hyaluronic acid. This Mus musculus (Mouse) protein is Hyaluronidase PH-20 (Spam1).